Here is a 159-residue protein sequence, read N- to C-terminus: Ribosomal RNA large subunit methyltransferase H (159 aa).

S-adenosyl-L-methionine-binding positions include Leu-76, Gly-108, and 127 to 132; that span reads FSKMTF.

It belongs to the RNA methyltransferase RlmH family. As to quaternary structure, homodimer.

It is found in the cytoplasm. It catalyses the reaction pseudouridine(1915) in 23S rRNA + S-adenosyl-L-methionine = N(3)-methylpseudouridine(1915) in 23S rRNA + S-adenosyl-L-homocysteine + H(+). Its function is as follows. Specifically methylates the pseudouridine at position 1915 (m3Psi1915) in 23S rRNA. This is Ribosomal RNA large subunit methyltransferase H from Staphylococcus aureus (strain MSSA476).